We begin with the raw amino-acid sequence, 263 residues long: UPF0328 protein ECU08_2060 (263 aa).

It belongs to the UPF0328 family.

This Encephalitozoon cuniculi (strain GB-M1) (Microsporidian parasite) protein is UPF0328 protein ECU08_2060.